The chain runs to 310 residues: N-acetyl-gamma-glutamyl-phosphate reductase (310 aa).

Cys-117 is a catalytic residue.

Belongs to the NAGSA dehydrogenase family. Type 2 subfamily.

The protein localises to the cytoplasm. The catalysed reaction is N-acetyl-L-glutamate 5-semialdehyde + phosphate + NADP(+) = N-acetyl-L-glutamyl 5-phosphate + NADPH + H(+). It functions in the pathway amino-acid biosynthesis; L-arginine biosynthesis; N(2)-acetyl-L-ornithine from L-glutamate: step 3/4. Catalyzes the NADPH-dependent reduction of N-acetyl-5-glutamyl phosphate to yield N-acetyl-L-glutamate 5-semialdehyde. The protein is N-acetyl-gamma-glutamyl-phosphate reductase of Rhizobium leguminosarum bv. trifolii (strain WSM2304).